Here is a 177-residue protein sequence, read N- to C-terminus: Acireductone dioxygenase (177 aa).

Fe(2+)-binding residues include His-99, His-101, Glu-105, and His-143. Residues His-99, His-101, Glu-105, and His-143 each contribute to the Ni(2+) site.

The protein belongs to the acireductone dioxygenase (ARD) family. As to quaternary structure, monomer. Fe(2+) is required as a cofactor. Ni(2+) serves as cofactor.

The enzyme catalyses 1,2-dihydroxy-5-(methylsulfanyl)pent-1-en-3-one + O2 = 3-(methylsulfanyl)propanoate + CO + formate + 2 H(+). The catalysed reaction is 1,2-dihydroxy-5-(methylsulfanyl)pent-1-en-3-one + O2 = 4-methylsulfanyl-2-oxobutanoate + formate + 2 H(+). It functions in the pathway amino-acid biosynthesis; L-methionine biosynthesis via salvage pathway; L-methionine from S-methyl-5-thio-alpha-D-ribose 1-phosphate: step 5/6. In terms of biological role, catalyzes 2 different reactions between oxygen and the acireductone 1,2-dihydroxy-3-keto-5-methylthiopentene (DHK-MTPene) depending upon the metal bound in the active site. Fe-containing acireductone dioxygenase (Fe-ARD) produces formate and 2-keto-4-methylthiobutyrate (KMTB), the alpha-ketoacid precursor of methionine in the methionine recycle pathway. Ni-containing acireductone dioxygenase (Ni-ARD) produces methylthiopropionate, carbon monoxide and formate, and does not lie on the methionine recycle pathway. In Leptospira borgpetersenii serovar Hardjo-bovis (strain L550), this protein is Acireductone dioxygenase.